We begin with the raw amino-acid sequence, 95 residues long: Cliotide T1 (95 aa).

The segment at residues 1–30 is a cross-link (cyclopeptide (Gly-Asn)); that stretch reads GIPCGESCVFIPCITGAIGCSCKSKVCYRN. Cystine bridges form between Cys4–Cys20, Cys8–Cys22, and Cys13–Cys27. The propeptide at 31-95 is removed in mature form; the sequence is HVIAAEAKTM…KDHLKMSITN (65 aa).

Post-translationally, contains 3 disulfide bonds. This is a cyclic peptide. Expressed in flower, stem, shoot, root, leaf, seed, pod and nodule (at protein level).

Functionally, probably participates in a plant defense mechanism. Active against Gram-negative bacteria E.coli ATCC 700926 (MIC=1.1 uM), K.pneumoniae ATTC 13883 (MIC=2.7 uM) and P.aeruginosa ATCC 39018 (MIC=4.7 uM). Has hemolytic and cytotoxic activity. The protein is Cliotide T1 of Clitoria ternatea (Butterfly pea).